The primary structure comprises 213 residues: Kiwellin (213 aa).

The first 24 residues, 1 to 24 (MAQLSLLVLSLFLTLISLPPPGAS), serve as a signal peptide directing secretion. 3 disulfide bridges follow: cysteine 28–cysteine 60, cysteine 32–cysteine 44, and cysteine 38–cysteine 49. 2 positions are modified to 4-hydroxyproline: proline 65 and proline 67. 4 disulfide bridges follow: cysteine 72–cysteine 90, cysteine 80–cysteine 172, cysteine 119–cysteine 144, and cysteine 166–cysteine 182. Residues 91 to 121 (SPPVTSSTPAKLTNNDFSEGGDGGGPSECDE) form a disordered region. The span at 93–107 (PVTSSTPAKLTNNDF) shows a compositional bias: polar residues.

It belongs to the kiwellin family. Undergoes proteolytic cleavage by actinidin to produce kissper and KiTH. Three forms of KiTH are produced by cleavage at different sites.

The protein localises to the secreted. Functionally, kissper is an anion-selective pore-forming peptide. This is Kiwellin from Actinidia chinensis var. chinensis (Chinese soft-hair kiwi).